The following is a 341-amino-acid chain: Anthranilate phosphoribosyltransferase (341 aa).

Residues G81, 84 to 85, T89, 91 to 94, 109 to 117, and S121 each bind 5-phospho-alpha-D-ribose 1-diphosphate; these read GD, NIST, and KHGSRSVSG. Anthranilate is bound at residue G81. S93 contacts Mg(2+). Residue R167 coordinates anthranilate. Positions 226 and 227 each coordinate Mg(2+).

The protein belongs to the anthranilate phosphoribosyltransferase family. Homodimer. It depends on Mg(2+) as a cofactor.

It catalyses the reaction N-(5-phospho-beta-D-ribosyl)anthranilate + diphosphate = 5-phospho-alpha-D-ribose 1-diphosphate + anthranilate. It functions in the pathway amino-acid biosynthesis; L-tryptophan biosynthesis; L-tryptophan from chorismate: step 2/5. In terms of biological role, catalyzes the transfer of the phosphoribosyl group of 5-phosphorylribose-1-pyrophosphate (PRPP) to anthranilate to yield N-(5'-phosphoribosyl)-anthranilate (PRA). In Methylococcus capsulatus (strain ATCC 33009 / NCIMB 11132 / Bath), this protein is Anthranilate phosphoribosyltransferase.